A 147-amino-acid polypeptide reads, in one-letter code: MTTYSPKVGEVQRNWYVIDAEDIVLGRLATTAANLLRGKHKPQYAPHIDTGDFVVVVNASKIALTGKKATDSLRYDHSGRPGGLRVTSIGEMLAKNPRRAVERAVWGMMPKNKLSRQQLKKLKVYGGPEHPHAAQNPQPYEITQIAQ.

Residues Gly126–Gln147 form a disordered region.

This sequence belongs to the universal ribosomal protein uL13 family. As to quaternary structure, part of the 50S ribosomal subunit.

Its function is as follows. This protein is one of the early assembly proteins of the 50S ribosomal subunit, although it is not seen to bind rRNA by itself. It is important during the early stages of 50S assembly. The protein is Large ribosomal subunit protein uL13 of Cutibacterium acnes (strain DSM 16379 / KPA171202) (Propionibacterium acnes).